A 739-amino-acid chain; its full sequence is Catalase-peroxidase (739 aa).

A disordered region spans residues 1-33; sequence MSVEHPPIGEANTEPAAGGCPVTGRLRHPLQGG. The tryptophyl-tyrosyl-methioninium (Trp-Tyr) (with M-255) cross-link spans 106 to 229; the sequence is WHSAGTYRSS…LAAVQMGLIY (124 aa). The active-site Proton acceptor is H107. Residues 113 to 134 are disordered; sequence RSSDGRGGANTGQQRFAPLNSW. Residues 229–255 constitute a cross-link (tryptophyl-tyrosyl-methioninium (Tyr-Met) (with W-106)); that stretch reads YVNPEGPNGNPDPLAAAVDIKDTFGRM. H270 is a heme b binding site.

This sequence belongs to the peroxidase family. Peroxidase/catalase subfamily. Homodimer or homotetramer. Heme b serves as cofactor. In terms of processing, formation of the three residue Trp-Tyr-Met cross-link is important for the catalase, but not the peroxidase activity of the enzyme.

It carries out the reaction H2O2 + AH2 = A + 2 H2O. The catalysed reaction is 2 H2O2 = O2 + 2 H2O. Functionally, bifunctional enzyme with both catalase and broad-spectrum peroxidase activity. The sequence is that of Catalase-peroxidase from Nocardia farcinica (strain IFM 10152).